The chain runs to 249 residues: (S)-1-Phenylethanol dehydrogenase (249 aa).

Residues 17–19, Asp-38, 61–63, Asn-89, and Tyr-93 contribute to the NAD(+) site; these read NGI and CDV. Ser-141 is a binding site for substrate. Tyr-154 (proton acceptor) is an active-site residue. NAD(+) contacts are provided by residues Lys-158, 184–187, and Thr-191; that span reads PSLV.

It belongs to the short-chain dehydrogenases/reductases (SDR) family. Homotetramer.

The enzyme catalyses (S)-1-phenylethanol + NAD(+) = acetophenone + NADH + H(+). Its function is as follows. Catalyzes the NAD-dependent stereospecific oxidation of (S)-1-phenylethanol to acetophenone in the degradation of ethylbenzene. The polypeptide is (S)-1-Phenylethanol dehydrogenase (ped) (Aromatoleum aromaticum (strain DSM 19018 / LMG 30748 / EbN1) (Azoarcus sp. (strain EbN1))).